A 221-amino-acid chain; its full sequence is Endo-1,4-beta-xylanase I (221 aa).

The first 30 residues, methionine 1–arginine 30, serve as a signal peptide directing secretion. Residues glutamine 31–asparagine 219 form the GH11 domain. Residue glutamate 115 is the Nucleophile of the active site. Positions aspartate 126–isoleucine 157 are disordered. Residue glutamate 206 is the Proton donor of the active site.

This sequence belongs to the glycosyl hydrolase 11 (cellulase G) family. Post-translationally, the N-terminus is blocked.

It is found in the secreted. It catalyses the reaction Endohydrolysis of (1-&gt;4)-beta-D-xylosidic linkages in xylans.. It participates in glycan degradation; xylan degradation. In terms of biological role, major xylan-degrading enzyme. Contributes to the hydrolysis of arabinoxylan, the major component of maize cell-walls. The protein is Endo-1,4-beta-xylanase I (XYL1) of Cochliobolus carbonum (Maize leaf spot fungus).